Here is a 160-residue protein sequence, read N- to C-terminus: Cytochrome b6-f complex subunit 4 (160 aa).

Transmembrane regions (helical) follow at residues 36–56, 95–115, and 131–151; these read LLYI…GLAI, LLGV…PFLE, and TVFL…TLPI.

This sequence belongs to the cytochrome b family. PetD subfamily. The 4 large subunits of the cytochrome b6-f complex are cytochrome b6, subunit IV (17 kDa polypeptide, petD), cytochrome f and the Rieske protein, while the 4 small subunits are petG, petL, petM and petN. The complex functions as a dimer.

The protein localises to the plastid. It is found in the chloroplast thylakoid membrane. Functionally, component of the cytochrome b6-f complex, which mediates electron transfer between photosystem II (PSII) and photosystem I (PSI), cyclic electron flow around PSI, and state transitions. The chain is Cytochrome b6-f complex subunit 4 from Oenothera elata subsp. hookeri (Hooker's evening primrose).